An 837-amino-acid polypeptide reads, in one-letter code: Endo-1,4-beta-xylanase Z (837 aa).

The first 28 residues, 1 to 28 (MSRKLFSVLLVGLMLMTSLLVTISSTSA), serve as a signal peptide directing secretion. A CBM6 domain is found at 299-420 (TRIEAEDYDG…PVNIDWFTFG (122 aa)). The Dockerin domain occupies 424–492 (SSTGLGDLNG…ILRIITEFPG (69 aa)). In terms of domain architecture, GH10 spans 512–833 (TISGNALRDY…KPAYNAIKEA (322 aa)). The Proton donor role is filled by E645. Catalysis depends on E754, which acts as the Nucleophile. C783 and C789 are joined by a disulfide.

The protein belongs to the glycosyl hydrolase 10 (cellulase F) family.

The enzyme catalyses Endohydrolysis of (1-&gt;4)-beta-D-xylosidic linkages in xylans.. This Acetivibrio thermocellus (strain ATCC 27405 / DSM 1237 / JCM 9322 / NBRC 103400 / NCIMB 10682 / NRRL B-4536 / VPI 7372) (Clostridium thermocellum) protein is Endo-1,4-beta-xylanase Z (xynZ).